The following is a 391-amino-acid chain: Transcription factor TCP3 (391 aa).

The segment at 1 to 34 (MAPDNDHFLDSPSPPLLEMRHHQSATENGGGCGE) is disordered. The region spanning 49 to 107 (RKDRHSKVCTAKGPRDRRVRLSAPTAIQFYDVQDRLGFDRPSKAVDWLITKAKSAIDDL) is the TCP domain. 3 disordered regions span residues 122 to 168 (HAAA…PASM), 317 to 345 (HHHH…PGIH), and 363 to 391 (FRIP…DSRH). Residues 381–391 (KPSSASSDSRH) show a composition bias toward polar residues.

In terms of assembly, interacts with SPL. Interacts with KIN10; KIN11 and FLZ3. In terms of tissue distribution, expressed in cotyledons, particularly in the vascular region, in leaves, roots, buds, flowers and immature siliques.

It localises to the nucleus. Functionally, plays a pivotal role in the control of morphogenesis of shoot organs by negatively regulating the expression of boundary-specific genes such as CUC genes, probably through the induction of miRNA (e.g. miR164). Participates in ovule development. The sequence is that of Transcription factor TCP3 (TCP3) from Arabidopsis thaliana (Mouse-ear cress).